The following is a 252-amino-acid chain: Receptor expression-enhancing protein 3-B (252 aa).

3 consecutive transmembrane segments (helical) span residues 1–21 (MVSG…YPAY), 35–55 (YVRW…ETIA), and 57–77 (LTVS…VWLL). The segment at 163 to 225 (ETAETRFFPD…GLRRSQSMRS (63 aa)) is disordered. Positions 198–211 (RTDEDVEVNSEDEV) are enriched in acidic residues.

Belongs to the DP1 family.

The protein resides in the endoplasmic reticulum membrane. Its function is as follows. Microtubule-binding protein required to ensure proper cell division and nuclear envelope reassembly by sequestering the endoplasmic reticulum away from chromosomes during mitosis. Probably acts by clearing the endoplasmic reticulum membrane from metaphase chromosomes. The protein is Receptor expression-enhancing protein 3-B (reep3-b) of Xenopus laevis (African clawed frog).